Here is a 278-residue protein sequence, read N- to C-terminus: Elongation factor Ts 2, mitochondrial (278 aa).

It belongs to the EF-Ts family.

It is found in the mitochondrion. Functionally, associates with the EF-Tu.GDP complex and induces the exchange of GDP to GTP. It remains bound to the aminoacyl-tRNA.EF-Tu.GTP complex up to the GTP hydrolysis stage on the ribosome. The protein is Elongation factor Ts 2, mitochondrial of Trypanosoma cruzi (strain CL Brener).